Reading from the N-terminus, the 130-residue chain is Small ribosomal subunit protein uS11 (130 aa).

Belongs to the universal ribosomal protein uS11 family. Part of the 30S ribosomal subunit. Interacts with proteins S7 and S18. Binds to IF-3.

Functionally, located on the platform of the 30S subunit, it bridges several disparate RNA helices of the 16S rRNA. Forms part of the Shine-Dalgarno cleft in the 70S ribosome. This Nitrobacter hamburgensis (strain DSM 10229 / NCIMB 13809 / X14) protein is Small ribosomal subunit protein uS11.